Here is a 694-residue protein sequence, read N- to C-terminus: Elongation factor G (694 aa).

Residues 9-288 enclose the tr-type G domain; it reads DAIRNIGIMA…VIVKWLPSPL (280 aa). GTP-binding positions include 18-25, 82-86, and 136-139; these read AHIDAGKT, DTPGH, and NKMD.

This sequence belongs to the TRAFAC class translation factor GTPase superfamily. Classic translation factor GTPase family. EF-G/EF-2 subfamily.

Its subcellular location is the cytoplasm. Catalyzes the GTP-dependent ribosomal translocation step during translation elongation. During this step, the ribosome changes from the pre-translocational (PRE) to the post-translocational (POST) state as the newly formed A-site-bound peptidyl-tRNA and P-site-bound deacylated tRNA move to the P and E sites, respectively. Catalyzes the coordinated movement of the two tRNA molecules, the mRNA and conformational changes in the ribosome. The chain is Elongation factor G from Chlamydia trachomatis serovar L2b (strain UCH-1/proctitis).